A 151-amino-acid polypeptide reads, in one-letter code: Protein-export protein SecB (151 aa).

Belongs to the SecB family. As to quaternary structure, homotetramer, a dimer of dimers. One homotetramer interacts with 1 SecA dimer.

It is found in the cytoplasm. Its function is as follows. One of the proteins required for the normal export of preproteins out of the cell cytoplasm. It is a molecular chaperone that binds to a subset of precursor proteins, maintaining them in a translocation-competent state. It also specifically binds to its receptor SecA. The protein is Protein-export protein SecB of Azoarcus sp. (strain BH72).